Consider the following 612-residue polypeptide: ETS-related transcription factor Elf-1 (612 aa).

S110, S163, S167, and S168 each carry phosphoserine. Positions 156–169 are enriched in polar residues; sequence VQETNADSPGASSP. The tract at residues 156–199 is disordered; the sequence is VQETNADSPGASSPEQRKRKKGRKTKPPRPDSPTTTPNISVKKK. A compositionally biased stretch (basic residues) spans 172–182; that stretch reads RKRKKGRKTKP. The residue at position 187 (S187) is a Phosphoserine. Position 190 is a phosphothreonine (T190). The segment at residues 208–290 is a DNA-binding region (ETS); the sequence is IYLWEFLLAL…EGQRLVYQFK (83 aa). The segment at 300–361 is disordered; sequence DDEDPSSSIE…AANPKDPVEV (62 aa). Residues 305-322 are compositionally biased toward low complexity; sequence SSSIESSDQSLSSTTASS. Over residues 323 to 335 the composition is skewed to polar residues; the sequence is RNQANRSRVSSSP. Phosphoserine is present on S431. A compositionally biased stretch (basic and acidic residues) spans 562–577; the sequence is EVEKKAEDDLNEDAEK. A disordered region spans residues 562–586; the sequence is EVEKKAEDDLNEDAEKSAQQPQPYV.

The protein belongs to the ETS family. As to quaternary structure, binds to the underphosphorylated form of RB. May interact with other transcription factors in order to regulate specific genes. Interacts with RUNX1. Interacts with SP1; the interaction is inhibited by glycosylation of SP1. Predominantly found in hematopoietic cells. Detected in other cell types such as fibroblasts.

It is found in the nucleus. Its function is as follows. Transcription factor that activates the LYN and BLK promoters. In Mus musculus (Mouse), this protein is ETS-related transcription factor Elf-1 (Elf1).